Consider the following 398-residue polypeptide: Serpin-Z2B (398 aa).

The interval 343 to 367 (GTEAAATTIAKVVLRQAPPPSVLDF) is RCL.

Belongs to the serpin family.

In terms of biological role, inhibits chymotrypsin, cathepsin G and trypsin in vitro. The protein is Serpin-Z2B of Triticum aestivum (Wheat).